A 210-amino-acid chain; its full sequence is Ribosomal RNA small subunit methyltransferase G (210 aa).

Residues glycine 77, phenylalanine 82, 100-102 (ERS), 128-129 (VE), and arginine 141 each bind S-adenosyl-L-methionine.

Belongs to the methyltransferase superfamily. RNA methyltransferase RsmG family.

It localises to the cytoplasm. Its function is as follows. Specifically methylates the N7 position of a guanine in 16S rRNA. The chain is Ribosomal RNA small subunit methyltransferase G from Borrelia duttonii (strain Ly).